The following is a 372-amino-acid chain: MPLNDFHVSEPYTLGIELEMQVINPPGYDLSQDSSTLIDAVKPQLTAGEIKHDITESMLEMATGVCRDIDQVAAQLSAMQHVILQAASEHHLGICGGGTHPFQKWQRQEVCDNERYQRTLENFGYLIQQATVFGQHVHVGCANGDDAIYLLHGLSHFVPHFIALSAASPYMQGSDTRFACARLNIFSAFPDNGPMPWVSNWQEFAGLFRRLSYTAMIDSIKDLHWDIRPSPDFGTVEVRVMDTPLTLDQAINMAGLIQATAHWLLTERPFKPQEQDYLLYKFNRFQACRYGLEGMLTDVYTGDRRRLADDTLRLLDNVTPSARKVGADSAIDALRLQVKKGGNEAQYMREFIADGGSLIGLVQKHCEIWAGQ.

This sequence belongs to the glutamate--cysteine ligase type 2 family. YbdK subfamily. Homodimer.

The catalysed reaction is L-cysteine + L-glutamate + ATP = gamma-L-glutamyl-L-cysteine + ADP + phosphate + H(+). ATP-dependent carboxylate-amine ligase which exhibits weak glutamate--cysteine ligase activity. The sequence is that of Putative glutamate--cysteine ligase 2 (ybdK) from Salmonella arizonae (strain ATCC BAA-731 / CDC346-86 / RSK2980).